The sequence spans 66 residues: M-poneratoxin-Dq3a (66 aa).

The N-terminal stretch at 1 to 23 is a signal peptide; sequence MKLSALSIIFGMILVMTIMYTKA. Positions 24-43 are excised as a propeptide; that stretch reads EAEAEAEADADADAKAEAEA.

It belongs to the non-disulfide-bridged peptide (NDBP) superfamily. Medium-length antimicrobial peptide (group 3) family. Ponericin-W subfamily. As to expression, expressed by the venom gland.

The protein resides in the secreted. Its subcellular location is the target cell membrane. May have antimicrobial properties by disrupting the integrity of the bacterial cell membrane. In addition, when tested in vitro on the parasite Trypanosoma cruzi (responsible of the Chagas disease), is able to potently reduce the number of the three forms (epimastigote, trypomastigote and amastigote) by inducing cell death through necrosis. Functionally, may have antimicrobial properties by disrupting the integrity of the bacterial cell membrane. In addition, when tested in vitro on the parasite Trypanosoma cruzi (responsible of the Chagas disease), is able to moderately reduce the number of the forms epimastigote and trypomastigote. Its activity on the amastigote form has not been tested. In terms of biological role, may have antimicrobial properties by disrupting the integrity of the bacterial cell membrane. In addition, when tested in vitro on the parasite Trypanosoma cruzi (responsible of the Chagas disease), shows only a weak reduction of the number of the trypomastigote forms. Has no activity on the epimastigote forms. Its activity on the amastigote form has not been tested. The sequence is that of M-poneratoxin-Dq3a from Dinoponera quadriceps (South American ant).